We begin with the raw amino-acid sequence, 144 residues long: Large ribosomal subunit protein uL15 (144 aa).

The segment at 1-57 (MQLNDLRSAPGARREKHRPGRGIGSGLGKTGGRGHKGLTSRSGGKVAPGFEGGQQPL) is disordered. Residues 21–31 (RGIGSGLGKTG) are compositionally biased toward gly residues.

This sequence belongs to the universal ribosomal protein uL15 family. In terms of assembly, part of the 50S ribosomal subunit.

Binds to the 23S rRNA. This is Large ribosomal subunit protein uL15 from Pseudomonas aeruginosa (strain LESB58).